A 639-amino-acid chain; its full sequence is E3 ubiquitin-protein ligase HEL2 (639 aa).

The disordered stretch occupies residues 1-55; sequence MSESVKENVTPTRNFRRTQGPQNNTKPHNDRKNFRRKQKKNNLSAEPNLTTSSAD. Serine 2 carries the N-acetylserine modification. Composition is skewed to polar residues over residues 7–26 and 43–54; these read ENVTPTRNFRRTQGPQNNTK and LSAEPNLTTSSA. Threonine 57 bears the Phosphothreonine mark. The segment at 64–104 adopts an RING-type zinc-finger fold; that stretch reads CVICARKLTYVSLTPCHHKTCHICGFRQRALYNKKSCLICR. An LIM zinc-binding domain is found at 222–292; that stretch reads PMCAFCSGKR…QTCLDNKFVV (71 aa). Positions 343–354 are enriched in low complexity; sequence SISSLPGSSSGS. Disordered stretches follow at residues 343-367 and 550-631; these read SISSLPGSSSGSRTDVRSASSPEES and LESK…GKQK. Serine 354 is modified (phosphoserine).

Belongs to the ZNF598/HEL2 family. In terms of assembly, interacts with the E2 ubiquitin-conjugating enzyme UBC4. Interacts with histones H3 and H4.

It localises to the cytoplasm. It carries out the reaction S-ubiquitinyl-[E2 ubiquitin-conjugating enzyme]-L-cysteine + [acceptor protein]-L-lysine = [E2 ubiquitin-conjugating enzyme]-L-cysteine + N(6)-ubiquitinyl-[acceptor protein]-L-lysine.. It participates in protein modification; protein ubiquitination. Functionally, E3 ubiquitin-protein ligase that plays a key role in the ribosome quality control (RQC), a pathway that takes place when a ribosome has stalled during translation, leading to degradation of nascent peptide chains. HEL2 is activated when ribosomes are stalled within an mRNA following translation of prematurely polyadenylated mRNAs. Acts as a ribosome collision sensor: specifically recognizes and binds collided ribosome and ubiquitinates the 40S ribosomal proteins RPS20/uS10 and RPS3/uS3. Catalyzes 'Lys-63'-linked polyubiquitination of RPS20/uS10, promoting recruitment of the RQT (ribosome quality control trigger) complex, which drives the disassembly of stalled ribosomes, followed by degradation of nascent peptides. HEL2 also acts as an activator of the No-Go decay (NGD) pathway by mediating polyubiquitination of monoubiquitinated RPS3/uS3 and RPS7/es7: RPS3/uS3 and RPS7/es7 are first monoubiquitinated by MAG2 and MOT2/NOT4, respectively, and HEL2 mediates formation of 'Lys-63'-linked polyubiquitin chains on monoubiquitin, leading to activation of the NGD pathway in a CUE2-mediated endonucleolytic cleavage. Polyubiquitination of RPS3/uS3 also triggers degradation of non-functional 18S rRNA. The RQC pathway and the integrated stress response (ISR) antagonize each other: HEL2 prevents the activation of GCN2, while GCN2 suppresses RQC activation. The RQC pathway functions as a preventive quality control in the secretory pathway: HEL2 binds preferentially to the pre-engaged secretory ribosome-nascent chain complexes and prevents mistargeting of secretory proteins into mitochondria. Independently of its role in RQC, also involved in the polyubiquitination and proteasomal-degradation of excess histone proteins. This is E3 ubiquitin-protein ligase HEL2 from Saccharomyces cerevisiae (strain ATCC 204508 / S288c) (Baker's yeast).